We begin with the raw amino-acid sequence, 393 residues long: Tryptophan 2,3-dioxygenase (393 aa).

Residues 56-60 (FIVTH) and Arg127 each bind substrate. His312 contacts heme. Position 327 (Thr327) interacts with substrate.

It belongs to the tryptophan 2,3-dioxygenase family. Homotetramer. Dimer of dimers. Heme serves as cofactor.

It carries out the reaction L-tryptophan + O2 = N-formyl-L-kynurenine. The protein operates within amino-acid degradation; L-tryptophan degradation via kynurenine pathway; L-kynurenine from L-tryptophan: step 1/2. It participates in pigment biosynthesis; ommochrome biosynthesis. Its activity is regulated as follows. Stimulated by low concentrations of hydrogen peroxide (5 uM), ascorbate (0.1-0.3 mM), and sodium hydrosulfite (0.1 mM). Inhibited by high concentrations of hydrogen peroxide (0.1 mM), ascorbate (10 mM), and sodium hydrosulfite (1 mM). Its function is as follows. Heme-dependent dioxygenase that catalyzes the oxidative cleavage of the L-tryptophan (L-Trp) pyrrole ring and converts L-tryptophan to N-formyl-L-kynurenine. Catalyzes the oxidative cleavage of the indole moiety. The polypeptide is Tryptophan 2,3-dioxygenase (Aedes aegypti (Yellowfever mosquito)).